The chain runs to 338 residues: Phenylalanine--tRNA ligase alpha subunit (338 aa).

Mg(2+) is bound at residue glutamate 259.

This sequence belongs to the class-II aminoacyl-tRNA synthetase family. Phe-tRNA synthetase alpha subunit type 1 subfamily. As to quaternary structure, tetramer of two alpha and two beta subunits. The cofactor is Mg(2+).

It is found in the cytoplasm. It catalyses the reaction tRNA(Phe) + L-phenylalanine + ATP = L-phenylalanyl-tRNA(Phe) + AMP + diphosphate + H(+). This chain is Phenylalanine--tRNA ligase alpha subunit, found in Janthinobacterium sp. (strain Marseille) (Minibacterium massiliensis).